The following is a 418-amino-acid chain: Serine hydroxymethyltransferase (418 aa).

Residues Leu121 and 125-127 (GHL) each bind (6S)-5,6,7,8-tetrahydrofolate. The residue at position 230 (Lys230) is an N6-(pyridoxal phosphate)lysine. 355 to 357 (SPF) contacts (6S)-5,6,7,8-tetrahydrofolate.

Belongs to the SHMT family. Homodimer. It depends on pyridoxal 5'-phosphate as a cofactor.

Its subcellular location is the cytoplasm. The catalysed reaction is (6R)-5,10-methylene-5,6,7,8-tetrahydrofolate + glycine + H2O = (6S)-5,6,7,8-tetrahydrofolate + L-serine. Its pathway is one-carbon metabolism; tetrahydrofolate interconversion. It functions in the pathway amino-acid biosynthesis; glycine biosynthesis; glycine from L-serine: step 1/1. Functionally, catalyzes the reversible interconversion of serine and glycine with tetrahydrofolate (THF) serving as the one-carbon carrier. This reaction serves as the major source of one-carbon groups required for the biosynthesis of purines, thymidylate, methionine, and other important biomolecules. Also exhibits THF-independent aldolase activity toward beta-hydroxyamino acids, producing glycine and aldehydes, via a retro-aldol mechanism. In Streptococcus agalactiae serotype V (strain ATCC BAA-611 / 2603 V/R), this protein is Serine hydroxymethyltransferase.